The sequence spans 383 residues: 2-aminoethylphosphonate--pyruvate transaminase (383 aa).

At Lys-192 the chain carries N6-(pyridoxal phosphate)lysine.

Belongs to the class-V pyridoxal-phosphate-dependent aminotransferase family. PhnW subfamily. Homodimer. Requires pyridoxal 5'-phosphate as cofactor.

The catalysed reaction is (2-aminoethyl)phosphonate + pyruvate = phosphonoacetaldehyde + L-alanine. Its function is as follows. Involved in phosphonate degradation. The sequence is that of 2-aminoethylphosphonate--pyruvate transaminase from Rhizobium meliloti (strain 1021) (Ensifer meliloti).